The sequence spans 991 residues: uncharacterized protein (991 aa).

Residues 1 to 17 form the signal peptide; it reads MLWPAALVAMFALAARA. Disordered regions lie at residues 332–352, 392–425, 469–511, 542–569, 587–641, and 658–734; these read DPLP…GETT, TTED…TTEG, EDST…EDTT, DTEA…TTPV, PAPT…NSLS, and ASSG…PPRI. Low complexity predominate over residues 400–413; that stretch reads TSTPTVTTVIDPTS. A compositionally biased stretch (polar residues) spans 414 to 425; sequence GAVTTESRTTEG. The span at 472 to 493 shows a compositional bias: low complexity; that stretch reads TTTARAAEYPTPTTTTVEPRPA. Residues 542–554 show a composition bias toward polar residues; it reads DTEAAQSATSISD. 2 stretches are compositionally biased toward low complexity: residues 556–569 and 598–615; these read VTPE…TTPV and ASTT…SHTP. Polar residues-rich tracts occupy residues 617–628 and 658–667; these read PQESTSTPSRAP and ASSGPGASTG. Low complexity predominate over residues 668–682; the sequence is ATTAPISPPWSASPA. A compositionally biased stretch (polar residues) spans 686–710; the sequence is VTTSAARTLEPSSTRKAVAAESTTA.

This is an uncharacterized protein from Psittacid herpesvirus 1 (isolate Amazon parrot/-/97-0001/1997) (PsHV-1).